A 752-amino-acid polypeptide reads, in one-letter code: Lid2 complex component jmj3 (752 aa).

The region spanning 34 to 75 (IPVVEPKISEFVDMESFIRRVERLGKKYGAIKVVRPSSVLNP) is the JmjN domain. The region spanning 162-333 (YTNRPSIPFY…NYEFSNLRRL (172 aa)) is the JmjC domain. 2 stretches are compositionally biased toward polar residues: residues 391 to 402 (SFSQRDFDSPNS) and 409 to 423 (LMSNHESASTEHFNS). The interval 391–438 (SFSQRDFDSPNSINPPSPLMSNHESASTEHFNSTTTTEKELSSLHVGE) is disordered. Basic and acidic residues predominate over residues 427–438 (TEKELSSLHVGE).

In terms of assembly, component of the Lid2 complex composed of ash2, jmj3, lid2, sdc1 and snt2.

It is found in the nucleus. The protein is Lid2 complex component jmj3 of Schizosaccharomyces pombe (strain 972 / ATCC 24843) (Fission yeast).